Consider the following 310-residue polypeptide: Protein-L-isoaspartate O-methyltransferase (310 aa).

Disordered regions lie at residues 1 to 42 and 64 to 90; these read MSGE…AADK and SAAA…APSV. Residues 14 to 32 show a composition bias toward basic and acidic residues; sequence EDLKRAPRKSEGRAGERHA. Over residues 64–81 the composition is skewed to low complexity; that stretch reads SAAAKPATAPKPTALKPA. Ser-157 is an active-site residue.

It belongs to the methyltransferase superfamily. L-isoaspartyl/D-aspartyl protein methyltransferase family.

The protein localises to the cytoplasm. The catalysed reaction is [protein]-L-isoaspartate + S-adenosyl-L-methionine = [protein]-L-isoaspartate alpha-methyl ester + S-adenosyl-L-homocysteine. Functionally, catalyzes the methyl esterification of L-isoaspartyl residues in peptides and proteins that result from spontaneous decomposition of normal L-aspartyl and L-asparaginyl residues. It plays a role in the repair and/or degradation of damaged proteins. The polypeptide is Protein-L-isoaspartate O-methyltransferase (Burkholderia lata (strain ATCC 17760 / DSM 23089 / LMG 22485 / NCIMB 9086 / R18194 / 383)).